A 184-amino-acid polypeptide reads, in one-letter code: Large ribosomal subunit protein uL15 (184 aa).

Residues 1–45 (MDLSSLRPAKGAVKNKKRVGRGQGSGNGTTAGKGNNGQQSRSGYK) are disordered. The span at 21–35 (RGQGSGNGTTAGKGN) shows a compositional bias: gly residues.

Belongs to the universal ribosomal protein uL15 family. As to quaternary structure, part of the 50S ribosomal subunit.

In terms of biological role, binds to the 23S rRNA. The polypeptide is Large ribosomal subunit protein uL15 (Pelodictyon phaeoclathratiforme (strain DSM 5477 / BU-1)).